The sequence spans 411 residues: uncharacterized protein (411 aa).

The UmuC domain maps to 20–199 (FLYFDFDAFF…LPITEIPGIG (180 aa)).

The protein belongs to the DNA polymerase type-Y family.

This is an uncharacterized protein from Mycoplasma genitalium (strain ATCC 33530 / DSM 19775 / NCTC 10195 / G37) (Mycoplasmoides genitalium).